We begin with the raw amino-acid sequence, 291 residues long: Nitrogenase iron protein 1 (291 aa).

10–17 (GKGGIGKS) contributes to the ATP binding site. Cys-98 is a [4Fe-4S] cluster binding site. Arg-101 carries the post-translational modification ADP-ribosylarginine; by dinitrogenase reductase ADP-ribosyltransferase. [4Fe-4S] cluster is bound at residue Cys-133.

The protein belongs to the NifH/BchL/ChlL family. As to quaternary structure, homodimer. The cofactor is [4Fe-4S] cluster. In terms of processing, the reversible ADP-ribosylation of Arg-101 inactivates the nitrogenase reductase and regulates nitrogenase activity.

It catalyses the reaction N2 + 8 reduced [2Fe-2S]-[ferredoxin] + 16 ATP + 16 H2O = H2 + 8 oxidized [2Fe-2S]-[ferredoxin] + 2 NH4(+) + 16 ADP + 16 phosphate + 6 H(+). Its function is as follows. The key enzymatic reactions in nitrogen fixation are catalyzed by the nitrogenase complex, which has 2 components: the iron protein (component 2) and a component 1 which is either a molybdenum-iron protein, a vanadium-iron, or an iron-iron protein. This is Nitrogenase iron protein 1 (nifH1) from Azotobacter chroococcum mcd 1.